The primary structure comprises 291 residues: 33 kDa chaperonin (291 aa).

Intrachain disulfides connect C229–C231 and C262–C265.

Belongs to the HSP33 family. Post-translationally, under oxidizing conditions two disulfide bonds are formed involving the reactive cysteines. Under reducing conditions zinc is bound to the reactive cysteines and the protein is inactive.

It localises to the cytoplasm. In terms of biological role, redox regulated molecular chaperone. Protects both thermally unfolding and oxidatively damaged proteins from irreversible aggregation. Plays an important role in the bacterial defense system toward oxidative stress. This is 33 kDa chaperonin from Vibrio parahaemolyticus serotype O3:K6 (strain RIMD 2210633).